A 122-amino-acid polypeptide reads, in one-letter code: Large ribosomal subunit protein uL14c (122 aa).

Belongs to the universal ribosomal protein uL14 family. In terms of assembly, part of the 50S ribosomal subunit.

The protein resides in the plastid. The protein localises to the chloroplast. In terms of biological role, binds to 23S rRNA. This Gracilaria tenuistipitata var. liui (Red alga) protein is Large ribosomal subunit protein uL14c.